Here is a 205-residue protein sequence, read N- to C-terminus: Rho-related GTP-binding protein RhoQ (205 aa).

Residue 16 to 23 coordinates GTP; it reads GDGAVGKT. The short motif at 38-46 is the Effector region element; it reads YVPTVFDHY. Residues 63–67 and 121–124 contribute to the GTP site; these read DTAGQ and TQID. C202 is subject to Cysteine methyl ester. The S-farnesyl cysteine moiety is linked to residue C202. The propeptide at 203–205 is removed in mature form; it reads LIT.

Belongs to the small GTPase superfamily. Rho family. As to quaternary structure, interacts with EXO70, CDC42EP1, CDC42EP2 and CDC42EP3 in a GTP-dependent manner. Interacts with CDC42EP4, PARD6A, PARD6G (and probably PARD6B) in a GTP-dependent manner. Part of a quaternary complex containing PARD3, some PARD6 protein (PARD6A, PARD6B or PARD6G) and some atypical PKC protein (PRKCI or PRKCZ). Interacts with GOPC. Interacts with ARHGAP33/TCGAP. May be post-translationally modified by both palmitoylation and polyisoprenylation.

It is found in the cytoplasm. It localises to the cell membrane. Regulated by guanine nucleotide exchange factors (GEFs) which promote the exchange of bound GDP for free GTP, GTPase activating proteins (GAPs) which increase the GTP hydrolysis activity, and GDP dissociation inhibitors which inhibit the dissociation of the nucleotide from the GTPase. Plasma membrane-associated small GTPase which cycles between an active GTP-bound and an inactive GDP-bound state. In active state binds to a variety of effector proteins to regulate cellular responses. Involved in epithelial cell polarization processes. May play a role in CFTR trafficking to the plasma membrane. Causes the formation of thin, actin-rich surface projections called filopodia. The protein is Rho-related GTP-binding protein RhoQ (Rhoq) of Mus musculus (Mouse).